Here is a 309-residue protein sequence, read N- to C-terminus: 4-hydroxy-3-methylbut-2-enyl diphosphate reductase (309 aa).

[4Fe-4S] cluster is bound at residue Cys12. His41 and His74 together coordinate (2E)-4-hydroxy-3-methylbut-2-enyl diphosphate. Dimethylallyl diphosphate-binding residues include His41 and His74. The isopentenyl diphosphate site is built by His41 and His74. Position 96 (Cys96) interacts with [4Fe-4S] cluster. His124 contributes to the (2E)-4-hydroxy-3-methylbut-2-enyl diphosphate binding site. Dimethylallyl diphosphate is bound at residue His124. Residue His124 participates in isopentenyl diphosphate binding. The active-site Proton donor is Glu126. (2E)-4-hydroxy-3-methylbut-2-enyl diphosphate is bound at residue Thr167. Cys197 contributes to the [4Fe-4S] cluster binding site. 4 residues coordinate (2E)-4-hydroxy-3-methylbut-2-enyl diphosphate: Ser225, Ser226, Asn227, and Ser269. Residues Ser225, Ser226, Asn227, and Ser269 each coordinate dimethylallyl diphosphate. Residues Ser225, Ser226, Asn227, and Ser269 each contribute to the isopentenyl diphosphate site.

It belongs to the IspH family. The cofactor is [4Fe-4S] cluster.

The catalysed reaction is isopentenyl diphosphate + 2 oxidized [2Fe-2S]-[ferredoxin] + H2O = (2E)-4-hydroxy-3-methylbut-2-enyl diphosphate + 2 reduced [2Fe-2S]-[ferredoxin] + 2 H(+). It catalyses the reaction dimethylallyl diphosphate + 2 oxidized [2Fe-2S]-[ferredoxin] + H2O = (2E)-4-hydroxy-3-methylbut-2-enyl diphosphate + 2 reduced [2Fe-2S]-[ferredoxin] + 2 H(+). It functions in the pathway isoprenoid biosynthesis; dimethylallyl diphosphate biosynthesis; dimethylallyl diphosphate from (2E)-4-hydroxy-3-methylbutenyl diphosphate: step 1/1. The protein operates within isoprenoid biosynthesis; isopentenyl diphosphate biosynthesis via DXP pathway; isopentenyl diphosphate from 1-deoxy-D-xylulose 5-phosphate: step 6/6. Catalyzes the conversion of 1-hydroxy-2-methyl-2-(E)-butenyl 4-diphosphate (HMBPP) into a mixture of isopentenyl diphosphate (IPP) and dimethylallyl diphosphate (DMAPP). Acts in the terminal step of the DOXP/MEP pathway for isoprenoid precursor biosynthesis. The polypeptide is 4-hydroxy-3-methylbut-2-enyl diphosphate reductase (Shewanella pealeana (strain ATCC 700345 / ANG-SQ1)).